The sequence spans 848 residues: Translation initiation factor IF-2 (848 aa).

Positions 1 to 10 are enriched in basic and acidic residues; that stretch reads MSENNNDKIT. 2 disordered regions span residues 1–79 and 121–163; these read MSEN…EKPV and AERQ…LFSS. The segment covering 17–33 has biased composition (polar residues); it reads LKRSGSETNTVKQNFNH. Basic and acidic residues predominate over residues 121 to 138; sequence AERQAAEKQAKESEEGLH. Residues 149–163 are compositionally biased toward polar residues; the sequence is KSSSNTTKPTPLFSS. Positions 346 to 513 constitute a tr-type G domain; it reads TRPPIVTIMG…AILLQAEILD (168 aa). The G1 stretch occupies residues 355-362; it reads GHVDHGKT. 355-362 is a binding site for GTP; sequence GHVDHGKT. The segment at 380 to 384 is G2; that stretch reads GITQH. Residues 401–404 are G3; sequence DTPG. GTP contacts are provided by residues 401–405 and 455–458; these read DTPGH and NKID. Positions 455–458 are G4; sequence NKID. Residues 491–493 are G5; that stretch reads SAK.

Belongs to the TRAFAC class translation factor GTPase superfamily. Classic translation factor GTPase family. IF-2 subfamily.

The protein resides in the cytoplasm. Its function is as follows. One of the essential components for the initiation of protein synthesis. Protects formylmethionyl-tRNA from spontaneous hydrolysis and promotes its binding to the 30S ribosomal subunits. Also involved in the hydrolysis of GTP during the formation of the 70S ribosomal complex. The polypeptide is Translation initiation factor IF-2 (Bartonella bacilliformis (strain ATCC 35685 / KC583 / Herrer 020/F12,63)).